Reading from the N-terminus, the 238-residue chain is Histone H1 (238 aa).

Composition is skewed to low complexity over residues 21-34 (AAVD…AKAP) and 123-132 (AKAPAAVKPK). 2 disordered regions span residues 21-57 (AAVD…AHPS) and 123-238 (AKAP…KAKK). Residues 54–124 (AHPSYAEMVS…KVKGSYKLAK (71 aa)) enclose the H15 domain. Residues 133 to 197 (TATKKKPAAK…AAKPKAKAAA (65 aa)) show a composition bias toward basic residues. 2 stretches are compositionally biased toward low complexity: residues 198-208 (KKAPAAATPKK) and 217-230 (KRAT…PAKK).

It belongs to the histone H1/H5 family.

Its subcellular location is the nucleus. It is found in the chromosome. Functionally, histones H1 are necessary for the condensation of nucleosome chains into higher-order structures. This is Histone H1 from Triticum aestivum (Wheat).